A 29-amino-acid polypeptide reads, in one-letter code: Cytochrome b6-f complex subunit 8 (29 aa).

Residues I3–V23 traverse the membrane as a helical segment.

Belongs to the PetN family. In terms of assembly, the 4 large subunits of the cytochrome b6-f complex are cytochrome b6, subunit IV (17 kDa polypeptide, PetD), cytochrome f and the Rieske protein, while the 4 small subunits are PetG, PetL, PetM and PetN. The complex functions as a dimer.

The protein resides in the plastid. The protein localises to the chloroplast thylakoid membrane. In terms of biological role, component of the cytochrome b6-f complex, which mediates electron transfer between photosystem II (PSII) and photosystem I (PSI), cyclic electron flow around PSI, and state transitions. This is Cytochrome b6-f complex subunit 8 from Phalaenopsis aphrodite subsp. formosana (Moth orchid).